The following is a 915-amino-acid chain: Protein ZDS1 (915 aa).

Disordered stretches follow at residues 1–28 (MSNR…KRKS), 69–134 (GESS…KKGV), 179–261 (LSDN…SETV), 310–330 (GSYS…EGDI), 412–433 (KSPF…SIGD), and 464–807 (KVRN…SILP). The span at 74–93 (RRSWSGTTSSSASMPSDTTT) shows a compositional bias: low complexity. Residues 115–125 (GIESSNKTKQG) show a composition bias toward polar residues. A compositionally biased stretch (basic and acidic residues) spans 202-212 (DKESQSYENKE). The residue at position 229 (S229) is a Phosphoserine. Residues 243–252 (EFDDNEDDDN) show a composition bias toward acidic residues. Basic and acidic residues predominate over residues 313 to 327 (SDKKDQPQPEGHYDE). Positions 464–480 (KVRNDTVEQDLELREGT) are enriched in basic and acidic residues. Residues 515–530 (DDNEENQGDDENEENV) are compositionally biased toward acidic residues. 2 stretches are compositionally biased toward basic and acidic residues: residues 531-541 (DSQRMELDNSK) and 552-562 (EKTEVSNKEEM). 2 stretches are compositionally biased toward low complexity: residues 565–574 (SSTSTATSQT) and 597–609 (SSSP…SSPS). Basic residues-rich tracts occupy residues 618 to 627 (VRVRKSKKLG) and 642 to 656 (NRPR…RHGS). Positions 668-679 (QPQQQIPLQPQL) are enriched in low complexity. A compositionally biased stretch (polar residues) spans 696–710 (LPQLQPAVSVSSTKS). Basic and acidic residues-rich tracts occupy residues 711 to 721 (NSRDREEEEAK) and 742 to 751 (VQKENTDEQK). The segment covering 752-793 (AQLQAPAQEQVQTSVPVQASAPVQNSAPVQTSAPVEASAQTQ) has biased composition (polar residues).

It to yeast ZDS2/MCS1. Interacts with BCY1, DBP5, GFD1 and SKG6.

It localises to the cytoplasm. Its function is as follows. Has a role in establishing cell polarity. Together with cAMP-dependent protein kinase regulatory subunit BCY1, provides a negative feedback control on the cell wall integrity-signaling pathway by acting as a negative regulator of MAP kinase SLT2/MPK1. In heat-stressed cells appears to play a role in localizing BCY1 to the cytoplasm. Seems to interact with, and down-regulate, CDC42. Also acts as a suppressor of PKC1. May act as an integration point for distinct signaling pathways helping to maintain a balance among these different pathways. In terms of biological role, when associated with DBP5, GFD1 and nucleoporins at the cytosolic fibrils of the nuclear pore complex, is required for mRNA export form the nucleus. In Saccharomyces cerevisiae (strain ATCC 204508 / S288c) (Baker's yeast), this protein is Protein ZDS1 (ZDS1).